A 63-amino-acid polypeptide reads, in one-letter code: Large ribosomal subunit protein uL29 (63 aa).

The protein belongs to the universal ribosomal protein uL29 family.

The polypeptide is Large ribosomal subunit protein uL29 (Photobacterium profundum (strain SS9)).